Consider the following 126-residue polypeptide: Fluoride-specific ion channel FluC (126 aa).

The next 4 membrane-spanning stretches (helical) occupy residues 3 to 23 (MILA…LTGV), 39 to 59 (TVNV…AHVW), 71 to 91 (VGVL…ALLV), and 101 to 121 (AYVA…LALI). The Na(+) site is built by glycine 75 and threonine 78.

This sequence belongs to the fluoride channel Fluc/FEX (TC 1.A.43) family.

The protein localises to the cell inner membrane. The catalysed reaction is fluoride(in) = fluoride(out). Na(+) is not transported, but it plays an essential structural role and its presence is essential for fluoride channel function. Fluoride-specific ion channel. Important for reducing fluoride concentration in the cell, thus reducing its toxicity. The sequence is that of Fluoride-specific ion channel FluC from Rhodospirillum centenum (strain ATCC 51521 / SW).